Here is a 264-residue protein sequence, read N- to C-terminus: Thymidylate synthase (264 aa).

Arg-21 contacts dUMP. His-51 contacts (6R)-5,10-methylene-5,6,7,8-tetrahydrofolate. 126-127 (RR) contacts dUMP. Cys-146 serves as the catalytic Nucleophile. Residues 166–169 (RSAD), Asn-177, and 207–209 (HLY) each bind dUMP. Residue Asp-169 participates in (6R)-5,10-methylene-5,6,7,8-tetrahydrofolate binding. Position 263 (Ala-263) interacts with (6R)-5,10-methylene-5,6,7,8-tetrahydrofolate.

The protein belongs to the thymidylate synthase family. Bacterial-type ThyA subfamily. Homodimer.

It localises to the cytoplasm. The enzyme catalyses dUMP + (6R)-5,10-methylene-5,6,7,8-tetrahydrofolate = 7,8-dihydrofolate + dTMP. It functions in the pathway pyrimidine metabolism; dTTP biosynthesis. In terms of biological role, catalyzes the reductive methylation of 2'-deoxyuridine-5'-monophosphate (dUMP) to 2'-deoxythymidine-5'-monophosphate (dTMP) while utilizing 5,10-methylenetetrahydrofolate (mTHF) as the methyl donor and reductant in the reaction, yielding dihydrofolate (DHF) as a by-product. This enzymatic reaction provides an intracellular de novo source of dTMP, an essential precursor for DNA biosynthesis. The polypeptide is Thymidylate synthase (Methylorubrum extorquens (strain CM4 / NCIMB 13688) (Methylobacterium extorquens)).